The chain runs to 161 residues: MORN repeat-containing protein 5 (161 aa).

MORN repeat units lie at residues 8–30 (YIGEYVDGRMEGKAKYILPTETI), 31–53 (YVGEMKDGMFHGEGTLYFPSGSQ), and 54–75 (YDAIWENGLAIKGTYTFSDGLH).

As to expression, expressed in sperm (at protein level).

The protein localises to the cell projection. It localises to the cilium. The protein resides in the flagellum. This is MORN repeat-containing protein 5 (MORN5) from Homo sapiens (Human).